Here is a 329-residue protein sequence, read N- to C-terminus: Calponin-3 (329 aa).

Lys-23 carries the post-translational modification N6-acetyllysine. Positions 26 to 130 constitute a Calponin-homology (CH) domain; sequence HQAEEDLRNW…TLVALAGLAK (105 aa). Lys-158 is subject to N6-methyllysine. Calponin-like repeat units lie at residues 164-189, 204-229, and 243-268; these read IGLQ…RHLY, ISLQ…RDIY, and ISLQ…RQVY. The disordered stretch occupies residues 280 to 329; the sequence is VIHNGSQGTGTNGSEISDSDYQAEYPDEYHGEYQDDYPRDYQYGDQGIDY. The span at 306-318 shows a compositional bias: basic and acidic residues; the sequence is DEYHGEYQDDYPR.

Belongs to the calponin family.

Functionally, thin filament-associated protein that is implicated in the regulation and modulation of smooth muscle contraction. It is capable of binding to actin, calmodulin and tropomyosin. The interaction of calponin with actin inhibits the actomyosin Mg-ATPase activity. The protein is Calponin-3 (CNN3) of Bos taurus (Bovine).